The primary structure comprises 561 residues: Putative transport protein YbjL (561 aa).

A run of 5 helical transmembrane segments spans residues 8–28, 32–52, 66–86, 94–114, and 158–178; these read LLNG…LCLG, LGSV…LLGQ, FMLF…SIFF, MLAL…GKLF, and NLSL…IVGA. RCK C-terminal domains follow at residues 200–288 and 292–373; these read RGLD…SFRN and VFDR…RIGF. Helical transmembrane passes span 383–403, 406–426, 447–467, 475–495, and 540–560; these read LLAF…TFQF, FSFG…LGFL, FGLM…INNG, MLIA…LFGA, and AIAN…WPGL.

The protein belongs to the AAE transporter (TC 2.A.81) family. YbjL subfamily.

The protein localises to the cell membrane. The chain is Putative transport protein YbjL from Salmonella paratyphi C (strain RKS4594).